The primary structure comprises 408 residues: Two-pore potassium channel 5 (408 aa).

Disordered regions lie at residues 1 to 29 (MEPL…SASI) and 58 to 82 (QSVQ…SQTR). The span at 15–29 (PIPENPSSSSSSASI) shows a compositional bias: low complexity. The Stromal segment spans residues 22–115 (SSSSSASITI…TKKPSPVSKS (94 aa)). Positions 63–72 (DKEDQDSDSD) are enriched in acidic residues. The helical transmembrane segment at 116–136 (IIRQAIFLLIVYLTLGVSIYS) threads the bilayer. The pore-forming intramembrane region spans 152-171 (DALYFCIVTMCTIGYGDIAP). The helical transmembrane segment at 178–198 (IFAVVFVLFGFGFLDILLSGV) threads the bilayer. Residues 199 to 248 (VNYVLDLQESMILTGIQTRQHHQHHHHHRFSAKDYIIDFEKGRMRIRMKV) are Stromal-facing. The chain crosses the membrane as a helical span at residues 249 to 269 (CLALCVVVLCIGVGALVLHFV). An intramembrane region (pore-forming) is located at residues 276 to 295 (DSVYLSVMSVTTVGYGDRAF). Residues 302-322 (LFAAVWLLVSTLAVARAFLYL) form a helical membrane-spanning segment. The Stromal segment spans residues 323–408 (AEARIDRRHR…TLPDLLGDPL (86 aa)). EF-hand domains lie at 339–374 (LNRE…EMGK) and 378–408 (KDID…GDPL). Asp-352, Glu-363, Asp-391, Asn-393, Lys-397, and Asp-402 together coordinate Ca(2+).

The protein belongs to the two pore domain potassium channel (TC 1.A.1.7) family. As to quaternary structure, homodimer. As to expression, expressed in hydathodes and the vascular tissues of roots, stems, leaves and flowers.

It is found in the vacuole membrane. In terms of biological role, probable voltage-independent potassium-selective tonoplast ion channel. The sequence is that of Two-pore potassium channel 5 (TPK5) from Arabidopsis thaliana (Mouse-ear cress).